We begin with the raw amino-acid sequence, 202 residues long: Orotate phosphoribosyltransferase (202 aa).

5-phospho-alpha-D-ribose 1-diphosphate is bound by residues Lys93 and 113–121 (EDIITTGGS). Orotate contacts are provided by Thr117 and Arg145.

This sequence belongs to the purine/pyrimidine phosphoribosyltransferase family. PyrE subfamily. In terms of assembly, homodimer. Requires Mg(2+) as cofactor.

It catalyses the reaction orotidine 5'-phosphate + diphosphate = orotate + 5-phospho-alpha-D-ribose 1-diphosphate. The protein operates within pyrimidine metabolism; UMP biosynthesis via de novo pathway; UMP from orotate: step 1/2. Its function is as follows. Catalyzes the transfer of a ribosyl phosphate group from 5-phosphoribose 1-diphosphate to orotate, leading to the formation of orotidine monophosphate (OMP). In Campylobacter fetus subsp. fetus (strain 82-40), this protein is Orotate phosphoribosyltransferase.